Here is a 480-residue protein sequence, read N- to C-terminus: Protein DETOXIFICATION 15 (480 aa).

The next 12 membrane-spanning stretches (helical) occupy residues 36 to 56 (GPLIAVSLLQFCLQIISVMFV), 69 to 89 (IATSFASVTGFTFLMGTASAM), 118 to 138 (LLSVPLSIVWANTEHFLVFFG), 143 to 163 (IAHLSGSYARFMIPSIFAYGL), 180 to 200 (VVICSGVTTSLHVIICWVLVL), 208 to 228 (GAAVANAISYWLNVILLSCYV), 255 to 275 (LVIPSAFMVCSLEMWSFELLV), 294 to 314 (VWMIPFGLSGAASTRVSNELG), 326 to 346 (RVVLSFSIVESILVGTVLILI), 360 to 380 (VVSHVASMLPILALGHSLDSF), 396 to 416 (IGAFVNLGSYYLVGVPFGLLL), and 428 to 448 (WLGIICALIVQGVCLSLITFF).

This sequence belongs to the multi antimicrobial extrusion (MATE) (TC 2.A.66.1) family.

The protein resides in the membrane. This chain is Protein DETOXIFICATION 15, found in Arabidopsis thaliana (Mouse-ear cress).